The chain runs to 215 residues: MOB kinase activator-like 1A (215 aa).

Residues 1–29 (MSLFGLGSRNQKTFRPKKSAPTGSKGAQL) form a disordered region. Zn(2+) is bound by residues Cys80, Cys85, His162, and His167.

This sequence belongs to the MOB1/phocein family. In terms of tissue distribution, isoform 1 is constitutively expressed. Isoform 2 is specifically expressed in flowers bud during sporogenesis and gametogenesis.

The protein localises to the cytoplasm. It localises to the cytoskeleton. Its subcellular location is the phragmoplast. The protein is MOB kinase activator-like 1A of Medicago sativa subsp. falcata (Sickle medic).